The sequence spans 216 residues: Kynurenine formamidase (216 aa).

Position 21 (phenylalanine 21) interacts with substrate. Positions 51, 55, and 57 each coordinate Zn(2+). The Proton donor/acceptor role is filled by histidine 61. Zn(2+) is bound by residues histidine 167 and glutamate 179.

The protein belongs to the Cyclase 1 superfamily. KynB family. As to quaternary structure, homodimer. Zn(2+) serves as cofactor.

The catalysed reaction is N-formyl-L-kynurenine + H2O = L-kynurenine + formate + H(+). The protein operates within amino-acid degradation; L-tryptophan degradation via kynurenine pathway; L-kynurenine from L-tryptophan: step 2/2. Functionally, catalyzes the hydrolysis of N-formyl-L-kynurenine to L-kynurenine, the second step in the kynurenine pathway of tryptophan degradation. The protein is Kynurenine formamidase of Paracidovorax citrulli (strain AAC00-1) (Acidovorax citrulli).